The following is a 110-amino-acid chain: uncharacterized protein (110 aa).

The N-terminal stretch at 1 to 16 (MKKILLIASMTAGLTA) is a signal peptide. A lipid anchor (N-palmitoyl cysteine) is attached at C17. C17 carries S-diacylglycerol cysteine lipidation.

The protein localises to the cell membrane. This is an uncharacterized protein from Salmonella typhimurium (strain LT2 / SGSC1412 / ATCC 700720).